Consider the following 40-residue polypeptide: Large ribosomal subunit protein bL36B (40 aa).

This sequence belongs to the bacterial ribosomal protein bL36 family.

This Kocuria rhizophila (strain ATCC 9341 / DSM 348 / NBRC 103217 / DC2201) protein is Large ribosomal subunit protein bL36B.